A 535-amino-acid polypeptide reads, in one-letter code: Endogenous retrovirus group V member 2 Env polyprotein (535 aa).

The signal sequence occupies residues 1–21 (MTEKFLFLYLSLLPMPLLSQA). Over 22 to 321 (QWNENSLVSF…NTTQPRQKRA (300 aa)) the chain is Extracellular. An N-linked (GlcNAc...) asparagine glycan is attached at Asn68. A helical transmembrane segment spans residues 322 to 342 (LGLILAGMGAAIGMIAPWGGF). The Cytoplasmic portion of the chain corresponds to 343-456 (TYHDVTLRNL…VKSALPSLNW (114 aa)). The chain crosses the membrane as a helical span at residues 457–477 (FVPLLGPATVILLLFLFGPCF). The Extracellular segment spans residues 478–535 (FNLLIKCVSSRIKQFHMKSPQMERYQLSVIGGPSTYKHISPLDASGQRFRETMEEFSL).

Belongs to the gamma type-C retroviral envelope protein family. In terms of tissue distribution, expressed in placenta.

It is found in the membrane. This Homo sapiens (Human) protein is Endogenous retrovirus group V member 2 Env polyprotein (ERVV-2).